The primary structure comprises 149 residues: Nucleoside diphosphate kinase (149 aa).

6 residues coordinate ATP: lysine 9, phenylalanine 57, arginine 85, threonine 91, arginine 102, and asparagine 112. Catalysis depends on histidine 115, which acts as the Pros-phosphohistidine intermediate.

It belongs to the NDK family. As to quaternary structure, homotetramer. Mg(2+) is required as a cofactor.

Its subcellular location is the cytoplasm. It catalyses the reaction a 2'-deoxyribonucleoside 5'-diphosphate + ATP = a 2'-deoxyribonucleoside 5'-triphosphate + ADP. The enzyme catalyses a ribonucleoside 5'-diphosphate + ATP = a ribonucleoside 5'-triphosphate + ADP. Major role in the synthesis of nucleoside triphosphates other than ATP. The ATP gamma phosphate is transferred to the NDP beta phosphate via a ping-pong mechanism, using a phosphorylated active-site intermediate. The sequence is that of Nucleoside diphosphate kinase from Crocosphaera subtropica (strain ATCC 51142 / BH68) (Cyanothece sp. (strain ATCC 51142)).